A 159-amino-acid chain; its full sequence is Transcriptional repressor NrdR (159 aa).

Residues Cys-3 to Cys-34 fold into a zinc finger. The region spanning Pro-49–Asp-139 is the ATP-cone domain.

It belongs to the NrdR family. The cofactor is Zn(2+).

Functionally, negatively regulates transcription of bacterial ribonucleotide reductase nrd genes and operons by binding to NrdR-boxes. The sequence is that of Transcriptional repressor NrdR from Syntrophus aciditrophicus (strain SB).